We begin with the raw amino-acid sequence, 525 residues long: UPF0288 protein MA_3997 (525 aa).

It belongs to the UPF0288 family.

The sequence is that of UPF0288 protein MA_3997 from Methanosarcina acetivorans (strain ATCC 35395 / DSM 2834 / JCM 12185 / C2A).